The sequence spans 656 residues: DNA ligase (656 aa).

NAD(+)-binding positions include 32 to 36 (DAVYD) and 81 to 82 (SL). The N6-AMP-lysine intermediate role is filled by Lys-112. 3 residues coordinate NAD(+): Arg-133, Glu-167, and Lys-306. Zn(2+)-binding residues include Cys-400, Cys-403, Cys-416, and Cys-421. The BRCT domain maps to 577-656 (KSSSVFSDKT…ELLKRLKELD (80 aa)).

This sequence belongs to the NAD-dependent DNA ligase family. LigA subfamily. Requires Mg(2+) as cofactor. It depends on Mn(2+) as a cofactor.

The enzyme catalyses NAD(+) + (deoxyribonucleotide)n-3'-hydroxyl + 5'-phospho-(deoxyribonucleotide)m = (deoxyribonucleotide)n+m + AMP + beta-nicotinamide D-nucleotide.. Its function is as follows. DNA ligase that catalyzes the formation of phosphodiester linkages between 5'-phosphoryl and 3'-hydroxyl groups in double-stranded DNA using NAD as a coenzyme and as the energy source for the reaction. It is essential for DNA replication and repair of damaged DNA. In Helicobacter pylori (strain J99 / ATCC 700824) (Campylobacter pylori J99), this protein is DNA ligase.